The sequence spans 62 residues: MAKGVRIIITLECTECRTNPNKRSQGVSRYTSTKNRRNTTSRLELKKFCTHCNRHTVHKEIK.

The protein belongs to the bacterial ribosomal protein bL33 family.

The protein is Large ribosomal subunit protein bL33 of Trichodesmium erythraeum (strain IMS101).